A 463-amino-acid chain; its full sequence is Interstitial collagenase B (463 aa).

A signal peptide spans 1-17 (MPSLPLLLRLWAASSYS). The propeptide at 18–96 (FPVIQDGLQK…PRCGVPDVAP (79 aa)) is activation peptide. The short motif at 87-94 (PRCGVPDV) is the Cysteine switch element. Residue C89 coordinates Zn(2+). The tract at residues 95–273 (APYAITHNNP…PIQLTDATLD (179 aa)) is metalloprotease. D155 lines the Ca(2+) pocket. Residues H165 and D167 each contribute to the Zn(2+) site. Positions 172 and 173 each coordinate Ca(2+). H180 lines the Zn(2+) pocket. Residues G187 and G189 each coordinate Ca(2+). H193 contributes to the Zn(2+) binding site. D195 provides a ligand contact to Ca(2+). H215 is a binding site for Zn(2+). Residue E216 is part of the active site. Zn(2+) is bound by residues H219 and H225. Cysteines 275 and 463 form a disulfide. Hemopexin repeat units follow at residues 278-321 (GLTF…WPNL) and 322-368 (PGKF…FGFP). D282 provides a ligand contact to Ca(2+). N-linked (GlcNAc...) asparagine glycosylation is present at N370. 2 Hemopexin repeats span residues 371-419 (VTNI…FPGI) and 420-463 (DYKV…WFNC). Residues D375 and D424 each contribute to the Ca(2+) site.

This sequence belongs to the peptidase M10A family. Requires Ca(2+) as cofactor. Zn(2+) is required as a cofactor.

It localises to the secreted. The protein resides in the extracellular space. Its subcellular location is the extracellular matrix. The enzyme catalyses Cleavage of the triple helix of collagen at about three-quarters of the length of the molecule from the N-terminus, at 775-Gly-|-Ile-776 in the alpha1(I) chain. Cleaves synthetic substrates and alpha-macroglobulins at bonds where P1' is a hydrophobic residue.. Its activity is regulated as follows. Can be activated without removal of the activation peptide. This is Interstitial collagenase B (Mmp1b) from Mus musculus (Mouse).